Reading from the N-terminus, the 1597-residue chain is Pentafunctional AROM polypeptide (1597 aa).

Residues 1-384 (MGVPTKISIL…HEPRASTVSN (384 aa)) form a 3-dehydroquinate synthase region. NAD(+) is bound by residues 44–46 (DTN), 81–84 (ESSK), 114–116 (GGV), and Asp-119. Arg-130 provides a ligand contact to 7-phospho-2-dehydro-3-deoxy-D-arabino-heptonate. 139 to 140 (TT) is a binding site for NAD(+). Positions 146 and 152 each coordinate 7-phospho-2-dehydro-3-deoxy-D-arabino-heptonate. Lys-161 provides a ligand contact to NAD(+). Asn-162 serves as a coordination point for 7-phospho-2-dehydro-3-deoxy-D-arabino-heptonate. Residues 179 to 182 (FLNT) and Asn-190 each bind NAD(+). Position 194 (Glu-194) interacts with Zn(2+). 7-phospho-2-dehydro-3-deoxy-D-arabino-heptonate contacts are provided by residues 194–197 (EVIK) and Lys-250. Glu-260 serves as the catalytic Proton acceptor; for 3-dehydroquinate synthase activity. 7-phospho-2-dehydro-3-deoxy-D-arabino-heptonate is bound by residues 264-268 (RNLLN) and His-271. His-271 is a binding site for Zn(2+). The active-site Proton acceptor; for 3-dehydroquinate synthase activity is His-275. Residues His-287 and Lys-356 each contribute to the 7-phospho-2-dehydro-3-deoxy-D-arabino-heptonate site. His-287 is a binding site for Zn(2+). Positions 397–842 (VSPGVPKNLN…WDSLAQTFKV (446 aa)) are EPSP synthase. Cys-824 acts as the For EPSP synthase activity in catalysis. Residues 866 to 1057 (ASIFIIGMRG…RSKENTFFVS (192 aa)) form a shikimate kinase region. 872–879 (GMRGAGKT) contributes to the ATP binding site. The tract at residues 1058 to 1278 (LTLPDLAPAA…AAPGQLSARE (221 aa)) is 3-dehydroquinase. His-1181 functions as the Proton acceptor; for 3-dehydroquinate dehydratase activity in the catalytic mechanism. Lys-1209 acts as the Schiff-base intermediate with substrate; for 3-dehydroquinate dehydratase activity in catalysis. The segment at 1291–1597 (SKKFAVIGNP…VQPKDDDIST (307 aa)) is shikimate dehydrogenase.

This sequence in the N-terminal section; belongs to the sugar phosphate cyclases superfamily. Dehydroquinate synthase family. It in the 2nd section; belongs to the EPSP synthase family. In the 3rd section; belongs to the shikimate kinase family. The protein in the 4th section; belongs to the type-I 3-dehydroquinase family. This sequence in the C-terminal section; belongs to the shikimate dehydrogenase family. As to quaternary structure, homodimer. It depends on Zn(2+) as a cofactor.

It is found in the cytoplasm. It carries out the reaction 7-phospho-2-dehydro-3-deoxy-D-arabino-heptonate = 3-dehydroquinate + phosphate. It catalyses the reaction 3-dehydroquinate = 3-dehydroshikimate + H2O. The enzyme catalyses shikimate + NADP(+) = 3-dehydroshikimate + NADPH + H(+). The catalysed reaction is shikimate + ATP = 3-phosphoshikimate + ADP + H(+). It carries out the reaction 3-phosphoshikimate + phosphoenolpyruvate = 5-O-(1-carboxyvinyl)-3-phosphoshikimate + phosphate. Its pathway is metabolic intermediate biosynthesis; chorismate biosynthesis; chorismate from D-erythrose 4-phosphate and phosphoenolpyruvate: step 2/7. It participates in metabolic intermediate biosynthesis; chorismate biosynthesis; chorismate from D-erythrose 4-phosphate and phosphoenolpyruvate: step 3/7. The protein operates within metabolic intermediate biosynthesis; chorismate biosynthesis; chorismate from D-erythrose 4-phosphate and phosphoenolpyruvate: step 4/7. It functions in the pathway metabolic intermediate biosynthesis; chorismate biosynthesis; chorismate from D-erythrose 4-phosphate and phosphoenolpyruvate: step 5/7. Its pathway is metabolic intermediate biosynthesis; chorismate biosynthesis; chorismate from D-erythrose 4-phosphate and phosphoenolpyruvate: step 6/7. Its function is as follows. The AROM polypeptide catalyzes 5 consecutive enzymatic reactions in prechorismate polyaromatic amino acid biosynthesis. The chain is Pentafunctional AROM polypeptide from Blastomyces gilchristii (strain SLH14081) (Blastomyces dermatitidis).